Reading from the N-terminus, the 243-residue chain is Protein IN2-1 homolog A (243 aa).

The GST N-terminal domain maps to 31–112 (GTTRLYICYF…YIDSHFEGPA (82 aa)). Glutathione contacts are provided by residues K70, V84, and 96–97 (ES). A GST C-terminal domain is found at 117-240 (DPEKRQFADE…YLLDLAKTHL (124 aa)).

This sequence belongs to the GST superfamily. HSP26 family.

The chain is Protein IN2-1 homolog A from Oryza sativa subsp. japonica (Rice).